The chain runs to 1045 residues: Suppression of tumorigenicity 18 protein (1045 aa).

Disordered regions lie at residues K38–A90, K158–K228, and P340–A364. Over residues N52 to H63 the composition is skewed to basic residues. 2 stretches are compositionally biased toward basic and acidic residues: residues G69–A90 and A159–D177. 6 CCHHC-type zinc fingers span residues P357–I400, L401–M444, R713–L756, M757–M800, E805–N848, and K858–V901. Positions 366, 371, 384, 390, 410, 415, 428, 434, 722, 727, 740, 746, 766, 771, 784, 790, 814, 819, 832, 838, 867, 872, 885, and 891 each coordinate Zn(2+). Residues I918–L987 are a coiled coil.

The protein belongs to the MYT1 family.

The protein localises to the nucleus. Functionally, repressor that binds to DNA sequences containing a bipartite element consisting of a direct repeat of the sequence 5'-AAAGTTT-3' separated by 2-9 nucleotides. Represses basal transcription activity from target promoters. The protein is Suppression of tumorigenicity 18 protein (St18) of Mus musculus (Mouse).